Here is a 374-residue protein sequence, read N- to C-terminus: MLRLSGVKSAVRARAAAGAAFSVSLSGPQAVSLLALPLVRHATKRAGGGKTNLKDSIGRRLGVKATEGTYVQPSDIIYRQRGTKFYPGENTWIGRDHTIYAKEPGYVRFYYDPFHPTRRFVGVGLTPEARLPTDHMAPRARRFGRNVISDPKRAEAELAWRPNKEQQLLEEISERRAVKQAEEQALTDKLAAKLKELGFDNSELAARAQKMAHYRTLGWTNAEAARFADAFLNTSSDVKDFDAKFEVTKFGTVVPKSSPETVEKELNETRDKLTKVRQPNAFISLSQIAKIDKILDATVYLSQSQKEQLADEFKVTASLLEAVQPHEEVVKAAKKGKGKLVKVYNVQRKGIDYVLAPKDAHFSEDIAFQKEFVH.

A mitochondrion-targeting transit peptide spans 1-41 (MLRLSGVKSAVRARAAAGAAFSVSLSGPQAVSLLALPLVRH).

Belongs to the bacterial ribosomal protein bL27 family.

The protein resides in the mitochondrion. Component of the large subunit of mitochondrial ribosome. This chain is Large ribosomal subunit protein bL27m (MRPL2), found in Yarrowia lipolytica (strain CLIB 122 / E 150) (Yeast).